We begin with the raw amino-acid sequence, 361 residues long: Phosphoserine aminotransferase (361 aa).

R42 contributes to the L-glutamate binding site. Residues 76-77, W102, T152, D172, and Q195 each bind pyridoxal 5'-phosphate; that span reads AT. Position 196 is an N6-(pyridoxal phosphate)lysine (K196). A pyridoxal 5'-phosphate-binding site is contributed by 237 to 238; the sequence is NT.

It belongs to the class-V pyridoxal-phosphate-dependent aminotransferase family. SerC subfamily. As to quaternary structure, homodimer. Pyridoxal 5'-phosphate is required as a cofactor.

It localises to the cytoplasm. The enzyme catalyses O-phospho-L-serine + 2-oxoglutarate = 3-phosphooxypyruvate + L-glutamate. It catalyses the reaction 4-(phosphooxy)-L-threonine + 2-oxoglutarate = (R)-3-hydroxy-2-oxo-4-phosphooxybutanoate + L-glutamate. The protein operates within amino-acid biosynthesis; L-serine biosynthesis; L-serine from 3-phospho-D-glycerate: step 2/3. It participates in cofactor biosynthesis; pyridoxine 5'-phosphate biosynthesis; pyridoxine 5'-phosphate from D-erythrose 4-phosphate: step 3/5. Catalyzes the reversible conversion of 3-phosphohydroxypyruvate to phosphoserine and of 3-hydroxy-2-oxo-4-phosphonooxybutanoate to phosphohydroxythreonine. The chain is Phosphoserine aminotransferase from Xanthomonas euvesicatoria pv. vesicatoria (strain 85-10) (Xanthomonas campestris pv. vesicatoria).